The primary structure comprises 644 residues: ATP-dependent zinc metalloprotease FtsH (644 aa).

Residues 1–13 (MANNDNKHRRSMS) lie on the Cytoplasmic side of the membrane. Residues 14–34 (MLLYIAVAIFVYLLLSNTLLP) traverse the membrane as a helical segment. Over 35–117 (GLLRQQIQTV…SIPDNSANML (83 aa)) the chain is Extracellular. Residues 118-138 (MYALIQYGIPLIIFLGIGFFI) form a helical membrane-spanning segment. The Cytoplasmic portion of the chain corresponds to 139–644 (NRSLKRAMGD…DEGSSTPSEE (506 aa)). Residue 224–231 (GPPGTGKT) coordinates ATP. H445 lines the Zn(2+) pocket. The active site involves E446. Zn(2+) contacts are provided by H449 and D522.

The protein in the central section; belongs to the AAA ATPase family. This sequence in the C-terminal section; belongs to the peptidase M41 family. In terms of assembly, homohexamer. Zn(2+) is required as a cofactor.

It is found in the cell membrane. Acts as a processive, ATP-dependent zinc metallopeptidase for both cytoplasmic and membrane proteins. Plays a role in the quality control of integral membrane proteins. The chain is ATP-dependent zinc metalloprotease FtsH from Lancefieldella parvula (strain ATCC 33793 / DSM 20469 / CCUG 32760 / JCM 10300 / KCTC 3663 / VPI 0546 / 1246) (Atopobium parvulum).